The chain runs to 215 residues: Elongation factor Ts (215 aa).

Positions 80–83 (TDFV) are involved in Mg(2+) ion dislocation from EF-Tu.

Belongs to the EF-Ts family.

It localises to the cytoplasm. Associates with the EF-Tu.GDP complex and induces the exchange of GDP to GTP. It remains bound to the aminoacyl-tRNA.EF-Tu.GTP complex up to the GTP hydrolysis stage on the ribosome. The polypeptide is Elongation factor Ts (Alkaliphilus metalliredigens (strain QYMF)).